Consider the following 182-residue polypeptide: Probable RNA 2'-phosphotransferase (182 aa).

The protein belongs to the KptA/TPT1 family.

Removes the 2'-phosphate from RNA via an intermediate in which the phosphate is ADP-ribosylated by NAD followed by a presumed transesterification to release the RNA and generate ADP-ribose 1''-2''-cyclic phosphate (APPR&gt;P). May function as an ADP-ribosylase. This is Probable RNA 2'-phosphotransferase from Pseudomonas fluorescens (strain ATCC BAA-477 / NRRL B-23932 / Pf-5).